The following is a 275-amino-acid chain: Small ribosomal subunit protein uS3 (275 aa).

Positions Ile-38–Lys-106 constitute a KH type-2 domain. Positions Ala-217 to Ser-275 are disordered. A compositionally biased stretch (low complexity) spans Ser-238–Ser-275.

It belongs to the universal ribosomal protein uS3 family. As to quaternary structure, part of the 30S ribosomal subunit. Forms a tight complex with proteins S10 and S14.

Functionally, binds the lower part of the 30S subunit head. Binds mRNA in the 70S ribosome, positioning it for translation. This chain is Small ribosomal subunit protein uS3, found in Mycobacterium marinum (strain ATCC BAA-535 / M).